The following is a 100-amino-acid chain: Urease subunit gamma (100 aa).

Belongs to the urease gamma subunit family. In terms of assembly, heterotrimer of UreA (gamma), UreB (beta) and UreC (alpha) subunits. Three heterotrimers associate to form the active enzyme. The apoenzyme interacts with an accessory complex composed of UreD, UreF and UreG, which is required for the assembly of the nickel containing metallocenter of UreC. The UreE protein may also play a direct role as a metallochaperone in nickel transfer to the urease apoprotein.

It localises to the cytoplasm. It carries out the reaction urea + 2 H2O + H(+) = hydrogencarbonate + 2 NH4(+). Its pathway is nitrogen metabolism; urea degradation; CO(2) and NH(3) from urea (urease route): step 1/1. The apoenzyme can be activated in vitro in the presence of nickel ions and carbon dioxide, which promotes carbamylation of 'Lys-217' of the UreC (alpha) subunit. The chain is Urease subunit gamma from Klebsiella aerogenes (Enterobacter aerogenes).